Reading from the N-terminus, the 312-residue chain is Olfactory receptor OR51C1 (312 aa).

Over 1 to 26 the chain is Extracellular; the sequence is MGSNITSTSIIFLLTGVPGLEAFHTW. A helical membrane pass occupies residues 27–47; that stretch reads ISIPFCFLSVTALLGNSLILF. Residues 48–66 are Cytoplasmic-facing; sequence ATITQPSLHEPMYYFLSML. Residues 67-87 traverse the membrane as a helical segment; it reads SATDLGLSISTLVTMLSIFWF. The Extracellular portion of the chain corresponds to 88 to 99; the sequence is NVREISFNACLS. Cysteines 97 and 179 form a disulfide. The chain crosses the membrane as a helical span at residues 100–120; sequence HMFFIKFFTVMESSVLLAMAF. The Cytoplasmic portion of the chain corresponds to 121 to 143; the sequence is DRFVAVSNPLRYAMILTDSRIAQ. The helical transmembrane segment at 144 to 164 threads the bilayer; it reads IGVASVIRGLLMLTPMVALLI. The Extracellular segment spans residues 165–201; that stretch reads RLSYCHSQVLHHSYCYHPDVMKLSCTDTRINSAVGLT. Residues 202 to 222 traverse the membrane as a helical segment; sequence AMFSTVGVDLLLILLSYVLII. The Cytoplasmic segment spans residues 223-240; the sequence is RTVLSVASPEERKETFST. The chain crosses the membrane as a helical span at residues 241 to 261; that stretch reads CVSHIVAFAIYYIPLISLSIV. Over 262-273 the chain is Extracellular; sequence HRFGKQAPAYVH. The helical transmembrane segment at 274–294 threads the bilayer; that stretch reads TMIANTYLLISPLMNPVIYSV. Residues 295–312 are Cytoplasmic-facing; the sequence is KTKQIRRAVIKILHSKET.

It belongs to the G-protein coupled receptor 1 family.

It localises to the membrane. Functionally, odorant receptor. This Homo sapiens (Human) protein is Olfactory receptor OR51C1.